Reading from the N-terminus, the 683-residue chain is DNA ligase (683 aa).

NAD(+) contacts are provided by residues 42 to 46 (DAEYD), 91 to 92 (SL), and Glu-122. Lys-124 (N6-AMP-lysine intermediate) is an active-site residue. Residues Arg-145, Glu-182, Lys-299, and Lys-323 each coordinate NAD(+). The Zn(2+) site is built by Cys-417, Cys-420, Cys-435, and Cys-441. The 82-residue stretch at 602-683 (APQGVLAGKT…MRKLLEGQTT (82 aa)) folds into the BRCT domain.

Belongs to the NAD-dependent DNA ligase family. LigA subfamily. Mg(2+) is required as a cofactor. It depends on Mn(2+) as a cofactor.

It catalyses the reaction NAD(+) + (deoxyribonucleotide)n-3'-hydroxyl + 5'-phospho-(deoxyribonucleotide)m = (deoxyribonucleotide)n+m + AMP + beta-nicotinamide D-nucleotide.. Its function is as follows. DNA ligase that catalyzes the formation of phosphodiester linkages between 5'-phosphoryl and 3'-hydroxyl groups in double-stranded DNA using NAD as a coenzyme and as the energy source for the reaction. It is essential for DNA replication and repair of damaged DNA. The chain is DNA ligase from Paraburkholderia phymatum (strain DSM 17167 / CIP 108236 / LMG 21445 / STM815) (Burkholderia phymatum).